Reading from the N-terminus, the 724-residue chain is Peroxidase mlt-7 (724 aa).

A signal peptide spans 1 to 24; sequence MRRLHRNLSLLFLICILNEYRIES. A glycan (N-linked (GlcNAc...) asparagine) is linked at N7. Positions 25-178 are excised as a propeptide; it reads QTLSPPITDR…GCVPQLSDVG (154 aa). The 35-residue stretch at 42 to 76 folds into the ShKT domain; it reads CCDHHEWCRFWASIGECNANKDWMTENCQLACGTC. A disulfide bond links C181 and C198. N233 carries an N-linked (GlcNAc...) asparagine glycan. H271 (proton acceptor) is an active-site residue. Position 272 (D272) interacts with Ca(2+). An intrachain disulfide couples C284 to C294. The Ca(2+) site is built by T335, Y337, D339, and S341. H493 is a heme b binding site. N-linked (GlcNAc...) asparagine glycans are attached at residues N509 and N617. Intrachain disulfides connect C588–C645 and C686–C710.

It belongs to the peroxidase family. The cofactor is heme b. In terms of tissue distribution, expressed in the hypodermal cells, specifically the head and seam/body.

The enzyme catalyses 2 a phenolic donor + H2O2 = 2 a phenolic radical donor + 2 H2O. In terms of biological role, plays an essential role in cuticle biogenesis. Required in combination with bli-3 for correct formation of cross-links in cuticle collagens. In Caenorhabditis elegans, this protein is Peroxidase mlt-7.